The following is an 85-amino-acid chain: Protein U62 (85 aa).

Belongs to the herpesviridae UL91 family.

This chain is Protein U62 (U62), found in Homo sapiens (Human).